Here is a 494-residue protein sequence, read N- to C-terminus: UDP-glucose 6-dehydrogenase (494 aa).

NAD(+) is bound by residues 11 to 16 (GAGYVG), D36, R41, and 89 to 93 (VNTPT). The interval 88 to 110 (SVNTPTKTYGMGKGRAADLKYIE) is disordered. K107 carries the post-translational modification N6-acetyllysine. Positions 129–135 (KSTVPVR) are allosteric switch region. 130–132 (STV) contributes to the NAD(+) binding site. The Proton donor/acceptor role is filled by E161. Residues 161 to 165 (EFLAE), 220 to 224 (KLTAN), R260, and 267 to 273 (KASVGFG) each bind substrate. NAD(+) is bound at residue E165. The Proton donor/acceptor role is filled by K220. The active-site Nucleophile is C276. Residue 276-279 (CFQK) participates in NAD(+) binding. Residues 321–325 (SLFNT) are important for formation of active hexamer structure. Residue 338-339 (FK) participates in substrate binding. R346 is an NAD(+) binding site. Substrate is bound at residue R442. Positions 466–494 (VSSKRIPYAPSGEIPKFSLQDMPNKKPRV) are disordered. S476 bears the Phosphoserine mark.

This sequence belongs to the UDP-glucose/GDP-mannose dehydrogenase family. As to quaternary structure, homohexamer.

The catalysed reaction is UDP-alpha-D-glucose + 2 NAD(+) + H2O = UDP-alpha-D-glucuronate + 2 NADH + 3 H(+). It participates in nucleotide-sugar biosynthesis; UDP-alpha-D-glucuronate biosynthesis; UDP-alpha-D-glucuronate from UDP-alpha-D-glucose: step 1/1. UDP-alpha-D-xylose (UDX) acts as a feedback inhibitor. It binds at the same site as the substrate, but functions as allosteric inhibitor by triggering a conformation change that disrupts the active hexameric ring structure and gives rise to an inactive, horseshoe-shaped hexamer. Functionally, catalyzes the formation of UDP-alpha-D-glucuronate, a constituent of complex glycosaminoglycans. Required for the biosynthesis of chondroitin sulfate and heparan sulfate. Required for embryonic development via its role in the biosynthesis of glycosaminoglycans. Required for proper brain and neuronal development. The polypeptide is UDP-glucose 6-dehydrogenase (UGDH) (Bos taurus (Bovine)).